Consider the following 57-residue polypeptide: Bowman-Birk type proteinase inhibitor B4 (57 aa).

Cystine bridges form between Cys6–Cys55, Cys12–Cys17, Cys26–Cys33, and Cys30–Cys47.

It belongs to the Bowman-Birk serine protease inhibitor family. Expressed in bulb (at protein level).

Functionally, serine protease inhibitor. Inhibits trypsin (Ki = 110 nM) and very weakly inhibits chymotrypsin (Ki =1200 nM). Does not inhibit bacterial subtilisin. This Hyacinthus orientalis (Common hyacinth) protein is Bowman-Birk type proteinase inhibitor B4.